The sequence spans 134 residues: MVKVINSSGKHKTATARATVMKGTGKVRINKIPLELYTPELAMMKISEPLLIAGKDVVSGLDINVDVRGGGIVGQANAVRTAVARGIVEWTNDTTIRDNFAAYDRNLLVSDSRQKEAKNFGGPGARSKYQKSYR.

The segment at 114-134 (QKEAKNFGGPGARSKYQKSYR) is disordered.

This sequence belongs to the universal ribosomal protein uS9 family.

The protein is Small ribosomal subunit protein uS9 of Methanosarcina mazei (strain ATCC BAA-159 / DSM 3647 / Goe1 / Go1 / JCM 11833 / OCM 88) (Methanosarcina frisia).